Reading from the N-terminus, the 734-residue chain is Myb-like protein J (734 aa).

Disordered stretches follow at residues 1-35 (MPNNQQNQIESPSKNTSNVGGSTLLNNNSPPFKSN), 128-196 (QKDQ…PTMM), and 221-378 (SPIS…LKQG). The span at 131 to 142 (QQQKEQQKEQQK) shows a compositional bias: basic and acidic residues. Over residues 164-173 (TTTTTTTTTT) the composition is skewed to low complexity. Positions 174-196 (AVEQQGAEQQDTNLNSTSSPTMM) are enriched in polar residues. Positions 221–230 (SPISSSLNNS) are enriched in low complexity. Over residues 231–257 (QDNTKPVSPDNIENTSNPMDTSSSNGK) the composition is skewed to polar residues. The span at 258–372 (TPTITPIVTP…GGKTNPTGKK (115 aa)) shows a compositional bias: low complexity. One can recognise an HTH myb-type domain in the interval 371 to 426 (KKTSLKQGWTKEEHIRFLNGIQIHGKGAWKEIAQFVGTRTPTQIQSHAQKYYLRQK). Residues 399 to 422 (WKEIAQFVGTRTPTQIQSHAQKYY) constitute a DNA-binding region (H-T-H motif). Residues 445 to 454 (DDNLNNSNKN) show a composition bias toward low complexity. The tract at residues 445-623 (DDNLNNSNKN…GNILRHQNSH (179 aa)) is disordered. Residues 455-468 (NVDKNKQDDKEKKT) are compositionally biased toward basic and acidic residues. A compositionally biased stretch (basic residues) spans 469–478 (QKTKKTKSKS). 2 stretches are compositionally biased toward low complexity: residues 489–543 (QQQQ…SSQT) and 574–615 (NNNN…NEGN).

The protein localises to the nucleus. In Dictyostelium discoideum (Social amoeba), this protein is Myb-like protein J (mybJ).